We begin with the raw amino-acid sequence, 115 residues long: U3-lycotoxin-Ls1k (115 aa).

A signal peptide spans 1 to 20 (MKSVLLFGVLLVTLFSYSSA). Residues 21–44 (EMLDDFDQADEDELLSLIEKEEAR) constitute a propeptide that is removed on maturation. 4 cysteine pairs are disulfide-bonded: cysteine 48–cysteine 63, cysteine 55–cysteine 72, cysteine 62–cysteine 87, and cysteine 74–cysteine 85.

This sequence belongs to the neurotoxin 19 (CSTX) family. 01 subfamily. In terms of tissue distribution, expressed by the venom gland.

Its subcellular location is the secreted. This is U3-lycotoxin-Ls1k from Lycosa singoriensis (Wolf spider).